Reading from the N-terminus, the 1927-residue chain is Lactase/phlorizin hydrolase (1927 aa).

The first 19 residues, 1–19 (MELSWHVVFIALLSFSCWG), serve as a signal peptide directing secretion. Residues 20–868 (SDWESDRNFI…NTVNLPSKVR (849 aa)) constitute a propeptide, XBetaGly. The Extracellular portion of the chain corresponds to 20–1882 (SDWESDRNFI…LMLGTTEAQT (1863 aa)). A glycan (N-linked (GlcNAc...) asparagine) is linked at Asn42. Residues 44-286 (SGLLGDQSSN…FIFNLKLPDC (243 aa)) are glycosyl hydrolase-1 1; Region I. A glycosyl hydrolase-1 2; Region II region spans residues 362 to 855 (IWEAFANQSR…GFLTKGAKRL (494 aa)). 7 N-linked (GlcNAc...) asparagine glycosylation sites follow: Asn368, Asn418, Asn512, Asn821, Asn934, Asn946, and Asn989. The glycosyl hydrolase-1 3; Region III. Phlorizin hydrolase/glycosylceramidase activity stretch occupies residues 902–1366 (TFRDDFLWGV…EVITNNGMPL (465 aa)). Glu1065 acts as the Proton donor; for phlorizin hydrolase/Glycosylceramidase activity in catalysis. N-linked (GlcNAc...) asparagine glycosylation occurs at Asn1174. A disordered region spans residues 1220-1244 (RLNPPSYEDDQEMAEEEDPSWPSTA). Positions 1226–1238 (YEDDQEMAEEEDP) are enriched in acidic residues. The active-site Nucleophile; for phlorizin hydrolase/Glycosylceramidase activity is Glu1273. N-linked (GlcNAc...) asparagine glycosylation is found at Asn1340 and Asn1508. Residues 1373–1846 (LYGRFPEGFI…CNGFPDPATG (474 aa)) form a glycosyl hydrolase-1 4; Region IV. Lactase activity region. Glu1538 functions as the Proton donor; for lactase activity in the catalytic mechanism. The required for homodimerization and transport to the plasma membrane stretch occupies residues 1647–1927 (RDRSLAAGLN…QQELSPVSSF (281 aa)). Asn1656 and Asn1672 each carry an N-linked (GlcNAc...) asparagine glycan. The active-site Nucleophile; for lactase activity is Glu1749. N-linked (GlcNAc...) asparagine glycosylation is found at Asn1761 and Asn1814. A helical transmembrane segment spans residues 1883-1901 (ALYVLFSLVLLGVCGLAFL). The Cytoplasmic segment spans residues 1902–1927 (SYKYCKRSKQGKTQRSQQELSPVSSF).

It belongs to the glycosyl hydrolase 1 family. As to quaternary structure, homodimer. Post-translationally, N-glycosylated. Specifically expressed in small intestine.

It is found in the apical cell membrane. It catalyses the reaction lactose + H2O = beta-D-galactose + D-glucose. The enzyme catalyses phlorizin + H2O = phloretin + beta-D-glucose. It carries out the reaction D-cellobiose + H2O = beta-D-glucose + D-glucose. The catalysed reaction is quercetin 4'-O-beta-D-glucoside + H2O = quercetin + beta-D-glucose. It catalyses the reaction quercetin 3-O-beta-D-glucoside + H2O = quercetin + beta-D-glucose. The enzyme catalyses kaempferol 3-O-beta-D-glucoside + H2O = kaempferol + beta-D-glucose. It carries out the reaction luteolin 7-O-beta-D-glucoside + H2O = luteolin + beta-D-glucose. The catalysed reaction is luteolin 4'-O-beta-D-glucoside + H2O = luteolin + beta-D-glucose. It catalyses the reaction (2S)-naringenin 7-O-beta-D-glucoside + H2O = (2S)-naringenin + beta-D-glucose. The enzyme catalyses eriodictyol-7-O-beta-D-glucoside + H2O = (S)-eriodictyol + beta-D-glucose. It carries out the reaction apigenin 7-O-beta-D-glucoside + H2O = apigenin + beta-D-glucose. The catalysed reaction is daidzein 7-O-beta-D-glucoside + H2O = daidzein + beta-D-glucose + H(+). It catalyses the reaction genistein 7-O-beta-D-glucoside + H2O = genistein + beta-D-glucose. The enzyme catalyses a beta-D-galactosyl-N-acylsphingosine + H2O = a ceramide + beta-D-galactose.. It carries out the reaction beta-D-glucosyl-(1&lt;-&gt;1')-N-hexadecanoylsphing-4-enine + H2O = N-hexadecanoylsphing-4-enine + beta-D-glucose. The catalysed reaction is beta-D-galactosyl-(1&lt;-&gt;1')-N-hexadecanoylsphing-4-enine + H2O = beta-D-galactose + N-hexadecanoylsphing-4-enine. It catalyses the reaction beta-D-galactosyl-(1&lt;-&gt;1')-N-hexadecanoylsphinganine + H2O = N-hexadecanoylsphinganine + beta-D-galactose. The enzyme catalyses beta-D-glucosyl-(1&lt;-&gt;1')-N-hexadecanoylsphinganine + H2O = N-hexadecanoylsphinganine + beta-D-glucose. Broad specificity glycosidase of the intestinal brush border membrane that hydrolyzes lactose, the main sugar in mammalian milk, to produce D-glucose and D-galactose. The mature protein is composed of two domains that catalyze the hydrolysis of beta-glucopyranosides and beta-galactopyranosides, with a preference for hydrophilic aglycones (in lactose and cellobiose) for one domain and hydrophobic aglycones (in phlorizin and glycosylceramides) for the other. This chain is Lactase/phlorizin hydrolase, found in Homo sapiens (Human).